We begin with the raw amino-acid sequence, 63 residues long: ORF6 protein (63 aa).

It belongs to the coronaviruses accessory protein 6 family.

It is found in the host endoplasmic reticulum membrane. The protein localises to the host Golgi apparatus membrane. In terms of biological role, could be a determinant of virus virulence. Seems to stimulate cellular DNA synthesis in vitro. This is ORF6 protein from Bat coronavirus HKU3 (BtCoV).